A 125-amino-acid chain; its full sequence is Oxytocin-neurophysin 1 (125 aa).

Residues 1 to 19 form the signal peptide; it reads MAGPSLACCLLGLLALTSA. An intrachain disulfide couples Cys-20 to Cys-25. Gly-28 is modified (glycine amide). Cystine bridges form between Cys-41–Cys-85, Cys-44–Cys-58, Cys-52–Cys-75, Cys-59–Cys-65, Cys-92–Cys-104, Cys-98–Cys-116, and Cys-105–Cys-110.

The protein belongs to the vasopressin/oxytocin family. Interacts with oxytocin receptor (Ki=1.5 nM). Interacts with vasopressin V1aR/AVPR1A (Ki=37 nM), V1bR/AVPR1B (Ki=222 nM) and V2R/AVPR2 receptors (Ki=823 nM).

It is found in the secreted. Functionally, neurophysin 1 specifically binds oxytocin. Its function is as follows. Oxytocin causes contraction of the smooth muscle of the uterus and of the mammary gland. Acts by binding to oxytocin receptor (OXTR). This chain is Oxytocin-neurophysin 1 (OXT), found in Homo sapiens (Human).